The following is a 457-amino-acid chain: ATP-dependent protease ATPase subunit HslU (457 aa).

Residues Val-21, 63–68 (GVGKTE), Asp-269, Glu-335, and Arg-407 contribute to the ATP site.

The protein belongs to the ClpX chaperone family. HslU subfamily. As to quaternary structure, a double ring-shaped homohexamer of HslV is capped on each side by a ring-shaped HslU homohexamer. The assembly of the HslU/HslV complex is dependent on binding of ATP.

It localises to the cytoplasm. Its function is as follows. ATPase subunit of a proteasome-like degradation complex; this subunit has chaperone activity. The binding of ATP and its subsequent hydrolysis by HslU are essential for unfolding of protein substrates subsequently hydrolyzed by HslV. HslU recognizes the N-terminal part of its protein substrates and unfolds these before they are guided to HslV for hydrolysis. The chain is ATP-dependent protease ATPase subunit HslU from Desulfotalea psychrophila (strain LSv54 / DSM 12343).